We begin with the raw amino-acid sequence, 139 residues long: Putative translationally-controlled tumor protein-like protein TPT1P8 (139 aa).

A TCTP domain is found at 1-139 (MIIFQDLISH…KTTSSLLVKT (139 aa)). Residues 40 to 51 (TGNTDDSLIGRN) show a composition bias toward polar residues. Positions 40–60 (TGNTDDSLIGRNSSSESTEDE) are disordered.

This sequence belongs to the TCTP family.

The polypeptide is Putative translationally-controlled tumor protein-like protein TPT1P8 (TPT1P8) (Homo sapiens (Human)).